The following is a 483-amino-acid chain: MGSISPQKPPHAILVPYPAQGHVNPLMQLGKLLHARGFYITFVNTEHNHRRLIRSRGQEFIDGLPDFKFEAIPDGLPYTDRDATQHVPSLSDSTRKHCLAPFIDLIAKLKASPDVPPITCIISDGVMAFAIDAARHFGILEIQFWTTSACGFMAYLHHIELVRRGIVPFKDESFLHDGTLDQPVDFIPGMPNMKLRDMPSFIRVTDVNDIMFDFLGSEAHKSLKADAIILNTFDELEQEVLDAIAARYSKNIYTVGPFILLEKGIPEIKSKAFRSSLWKEDLSCLEWLDKREPDSVVYVNYGCVTTITNEQLNEFAWGLANSKHPFLWIVRPDVVMGESAVLPEEFYEEIKDRGLLVSWVPQDRVLQHPAVGVFLSHCGWNSTIECISGGKPMICWPFFAEQQTNCKYACDVWKTGVELSTNLKREELVSIIKEMMETEIGRERRRRAVEWRKKAEEAISVGGVSYNNFDTFIKEVILQQQTQ.

H22 acts as the Proton acceptor in catalysis. H22 contributes to the an anthocyanidin binding site. D124 acts as the Charge relay in catalysis. UDP-alpha-D-glucose contacts are provided by T146, V360, Q362, H377, W380, N381, S382, and E385. A400 lines the an anthocyanidin pocket. UDP-alpha-D-glucose contacts are provided by E401 and Q402.

This sequence belongs to the UDP-glycosyltransferase family. Expressed in the cortex, xylem and phloem parenchyma, and in specific cells in the endodermis of the petiole of the first unfolded leaf.

It carries out the reaction 2-hydroxy-2-methylpropanenitrile + UDP-alpha-D-glucose = linamarin + UDP + H(+). In terms of biological role, UDP-glucosyltransferase catalyzing in planta synthesis of cyanogenic glucosides. Able to glucosylate acetone cyanohydrin and 2-hydroxy-2-methylbutyronitrile, forming linamarin and lotaustralin. Also accepts, to some extent, a wide range of potential acceptor substrates, including simple alcohols, flavonoids, isoflavonoids and other hydroxynitriles such as p-hydroxymandelonitrile, mandelonitrile, (E)-4-hydroxy-2-methylbut-2-enenitrile and (E)- 2-(hydroxymethyl)but-2-enenitrile. This is Linamarin synthase 1 from Manihot esculenta (Cassava).